We begin with the raw amino-acid sequence, 155 residues long: Small ribosomal subunit protein uS7c (155 aa).

This sequence belongs to the universal ribosomal protein uS7 family. As to quaternary structure, part of the 30S ribosomal subunit.

It is found in the plastid. The protein localises to the chloroplast. Functionally, one of the primary rRNA binding proteins, it binds directly to 16S rRNA where it nucleates assembly of the head domain of the 30S subunit. The chain is Small ribosomal subunit protein uS7c (rps7) from Cryptomeria japonica (Japanese cedar).